We begin with the raw amino-acid sequence, 1167 residues long: Integrin alpha-E (1167 aa).

A signal peptide spans 1-19 (MKWLFHTLLCMASLKPQGA). Residues 20–1114 (FNLDVDWAWV…IFLKEEETRS (1095 aa)) lie on the Extracellular side of the membrane. FG-GAP repeat units follow at residues 27-81 (AWVT…PDEI) and 84-142 (QPVE…LQAQ). Residue N51 is glycosylated (N-linked (GlcNAc...) asparagine). Cystine bridges form between C72–C83 and C130–C164. An X-domain (extra domain) region spans residues 149–192 (EGFLDPGAHVDSGDYCRSKGGSTGEEKKSARRRRTVEEEDEEED). The disordered stretch occupies residues 163–191 (YCRSKGGSTGEEKKSARRRRTVEEEDEEE). The region spanning 193 to 382 (GTEIAIVLDG…SKLQQHIVHM (190 aa)) is the VWFA domain. Residues N256, N314, N341, N364, N418, and N437 are each glycosylated (N-linked (GlcNAc...) asparagine). An FG-GAP 3 repeat occupies 383–435 (EGTVGDALQYQLAQTGFSAQILDKGQVLLGTVGAFNWSGGALLYSTQNGRGCF). 4 FG-GAP repeats span residues 438 to 491 (QTAK…REED), 492 to 552 (AFVR…DASF), 555 to 619 (AHTL…GLYD), and 623 to 683 (QQIR…FTPD). Residues D514, D516, D518, D522, D578, N580, D582, D586, D646, N648, D650, and D654 each contribute to the Ca(2+) site. A disulfide bridge connects residues C698 and C754. N-linked (GlcNAc...) asparagine glycosylation is found at N718 and N773. A disulfide bond links C814 and C820. N-linked (GlcNAc...) asparagine glycans are attached at residues N829 and N846. A disulfide bond links C884 and C898. Residues N911, N925, N968, and N1013 are each glycosylated (N-linked (GlcNAc...) asparagine). 2 disulfides stabilise this stretch: C998-C1023 and C1031-C1047. N1055 and N1086 each carry an N-linked (GlcNAc...) asparagine glycan. The helical transmembrane segment at 1115 to 1137 (LPLIIGSSIGGLLVLVVIIAILF) threads the bilayer. Over 1138 to 1167 (KCGFFKRKYQQLNLESTRRAQLKADSLLQD) the chain is Cytoplasmic. The GFFKR motif motif lies at 1140-1144 (GFFKR).

Belongs to the integrin alpha chain family. In terms of assembly, heterodimer of an alpha and a beta subunit. The alpha subunit is composed of a heavy and a light chains linked by a disulfide bond. Alpha-E associates with beta-7.

It localises to the membrane. Integrin alpha-E/beta-7 is a receptor for E-cadherin. It mediates adhesion of intra-epithelial T-lymphocytes to epithelial cell monolayers. Mice expressing a null mutation of the alpha-E subunit gene exhibit a marked reduction in the numbers of intraepithelial lymphocytes in the gut and in the development of gut-associated lymphoid aggregates, supporting a specific role for this integrin in mediating retention of lymphocytes in the intestinal wall. In Mus musculus (Mouse), this protein is Integrin alpha-E (Itgae).